Reading from the N-terminus, the 1411-residue chain is DNA-directed RNA polymerase subunit beta' (1411 aa).

Cys70, Cys72, Cys85, and Cys88 together coordinate Zn(2+). Mg(2+)-binding residues include Asp458, Asp460, and Asp462. Residues Cys813, Cys887, Cys894, and Cys897 each coordinate Zn(2+). A disordered region spans residues Ala1384 to Glu1411.

It belongs to the RNA polymerase beta' chain family. As to quaternary structure, the RNAP catalytic core consists of 2 alpha, 1 beta, 1 beta' and 1 omega subunit. When a sigma factor is associated with the core the holoenzyme is formed, which can initiate transcription. Mg(2+) is required as a cofactor. The cofactor is Zn(2+).

The catalysed reaction is RNA(n) + a ribonucleoside 5'-triphosphate = RNA(n+1) + diphosphate. Its function is as follows. DNA-dependent RNA polymerase catalyzes the transcription of DNA into RNA using the four ribonucleoside triphosphates as substrates. The polypeptide is DNA-directed RNA polymerase subunit beta' (Paracidovorax citrulli (strain AAC00-1) (Acidovorax citrulli)).